Reading from the N-terminus, the 446-residue chain is tRNA modification GTPase MnmE (446 aa).

Positions 24, 81, and 120 each coordinate (6S)-5-formyl-5,6,7,8-tetrahydrofolate. The TrmE-type G domain occupies 216 to 368; the sequence is GLHAVLIGPP…LHIRLRALAL (153 aa). Residue N226 coordinates K(+). Residues 226 to 231, 245 to 251, and 270 to 273 each bind GTP; these read NAGKSS, TDVAGTT, and DTAG. Residue S230 participates in Mg(2+) binding. Residues T245, V247, and T250 each coordinate K(+). T251 contributes to the Mg(2+) binding site. K446 serves as a coordination point for (6S)-5-formyl-5,6,7,8-tetrahydrofolate.

The protein belongs to the TRAFAC class TrmE-Era-EngA-EngB-Septin-like GTPase superfamily. TrmE GTPase family. Homodimer. Heterotetramer of two MnmE and two MnmG subunits. Requires K(+) as cofactor.

It is found in the cytoplasm. Its function is as follows. Exhibits a very high intrinsic GTPase hydrolysis rate. Involved in the addition of a carboxymethylaminomethyl (cmnm) group at the wobble position (U34) of certain tRNAs, forming tRNA-cmnm(5)s(2)U34. In Xanthomonas euvesicatoria pv. vesicatoria (strain 85-10) (Xanthomonas campestris pv. vesicatoria), this protein is tRNA modification GTPase MnmE.